The chain runs to 149 residues: Nucleoside diphosphate kinase (149 aa).

ATP is bound by residues Lys-9, Phe-57, Arg-85, Thr-91, Arg-102, and Asn-112. Catalysis depends on His-115, which acts as the Pros-phosphohistidine intermediate.

It belongs to the NDK family. In terms of assembly, homotetramer. The cofactor is Mg(2+).

The protein localises to the cytoplasm. The enzyme catalyses a 2'-deoxyribonucleoside 5'-diphosphate + ATP = a 2'-deoxyribonucleoside 5'-triphosphate + ADP. It catalyses the reaction a ribonucleoside 5'-diphosphate + ATP = a ribonucleoside 5'-triphosphate + ADP. Its function is as follows. Major role in the synthesis of nucleoside triphosphates other than ATP. The ATP gamma phosphate is transferred to the NDP beta phosphate via a ping-pong mechanism, using a phosphorylated active-site intermediate. The chain is Nucleoside diphosphate kinase from Trichodesmium erythraeum (strain IMS101).